A 170-amino-acid chain; its full sequence is Flavodoxin (170 aa).

Residues 4–165 form the Flavodoxin-like domain; it reads IGLFYGTQTG…RIKTWVSQLK (162 aa).

The protein belongs to the flavodoxin family. The cofactor is FMN.

Functionally, low-potential electron donor to a number of redox enzymes. This is Flavodoxin (isiB) from Synechococcus elongatus (strain ATCC 33912 / PCC 7942 / FACHB-805) (Anacystis nidulans R2).